Consider the following 217-residue polypeptide: Probable GTP-binding protein EngB (217 aa).

Residues 33–217 (GPTEIAFAGR…RAAIELAVAR (185 aa)) form the EngB-type G domain. GTP-binding positions include 41-48 (GRSNVGKS), 68-72 (GRTQE), 95-98 (DMPG), 162-165 (TKTD), and 196-198 (TSS). Residues S48 and T70 each coordinate Mg(2+).

It belongs to the TRAFAC class TrmE-Era-EngA-EngB-Septin-like GTPase superfamily. EngB GTPase family. Mg(2+) is required as a cofactor.

In terms of biological role, necessary for normal cell division and for the maintenance of normal septation. The chain is Probable GTP-binding protein EngB from Sinorhizobium medicae (strain WSM419) (Ensifer medicae).